The primary structure comprises 338 residues: Sorting nexin-15 (338 aa).

The PX domain occupies 1-131 (MSRRAKKDDF…EFFRGGEVTR (131 aa)). The a 1,2-diacyl-sn-glycero-3-phospho-(1D-myo-inositol-3-phosphate) site is built by R52, S54, R88, and R97. Residue R106 is modified to Omega-N-methylarginine. A disordered region spans residues 134–155 (EVSRDLQILPPPLIPTPPSDEA). The span at 142 to 151 (LPPPLIPTPP) shows a compositional bias: pro residues. S202 and S228 each carry phosphoserine. The segment at 240-270 (VQSKRLDQEPWEPGGREEEEAEDGDPAPAYL) is disordered. Positions 266 to 338 (APAYLGQATE…RAETLHAHLP (73 aa)) constitute an MIT domain.

This sequence belongs to the sorting nexin family. As to quaternary structure, homodimer. Interacts with SNX1, SNX2 and SNX4.

Its subcellular location is the cytoplasm. It localises to the membrane. The protein resides in the cytoplasmic vesicle membrane. Functionally, may be involved in several stages of intracellular trafficking. Overexpression of SNX15 disrupts the normal trafficking of proteins from the plasma membrane to recycling endosomes or the TGN. This is Sorting nexin-15 (Snx15) from Rattus norvegicus (Rat).